Here is a 198-residue protein sequence, read N- to C-terminus: GTP cyclohydrolase-2 (198 aa).

GTP is bound at residue 49–53; that stretch reads RVHSE. Zn(2+)-binding residues include cysteine 54, cysteine 65, and cysteine 67. GTP-binding positions include glutamine 70, 92-94, and threonine 114; that span reads EGR. Aspartate 126 serves as the catalytic Proton acceptor. Arginine 128 functions as the Nucleophile in the catalytic mechanism. Residues threonine 149 and lysine 154 each contribute to the GTP site.

Belongs to the GTP cyclohydrolase II family. Homodimer. It depends on Zn(2+) as a cofactor.

The enzyme catalyses GTP + 4 H2O = 2,5-diamino-6-hydroxy-4-(5-phosphoribosylamino)-pyrimidine + formate + 2 phosphate + 3 H(+). It participates in cofactor biosynthesis; riboflavin biosynthesis; 5-amino-6-(D-ribitylamino)uracil from GTP: step 1/4. In terms of biological role, catalyzes the conversion of GTP to 2,5-diamino-6-ribosylamino-4(3H)-pyrimidinone 5'-phosphate (DARP), formate and pyrophosphate. In Escherichia fergusonii (strain ATCC 35469 / DSM 13698 / CCUG 18766 / IAM 14443 / JCM 21226 / LMG 7866 / NBRC 102419 / NCTC 12128 / CDC 0568-73), this protein is GTP cyclohydrolase-2.